Here is a 312-residue protein sequence, read N- to C-terminus: MTAAPAAANNAAPAPKTPRRGVLAAYLALTKPRVIELLLVTTVPAMFLAQRGIPSPWLVLVTLAGGAMSAGSANALNCVADSDIDAVMDRTKKRPLVSYEVPRRSALVFGIVLGVVSFAVLALGANLLAAVLSLAAILFYVFVYTLVLKRRTSQNIVWGGAAGCMPVVIGWAAVTGSVEWPALVMFGVVFLWTPPHFWSLAMKYREDYARAGVPMLPVVATPRQVSARILVYSWATVACTLLLVPATSWVYVAFAVLAGAAFLIVAQRLHNSIRRGHAYNPMKLFHLSNSYLALLFVAIAVDSAVGLPSFVA.

The next 9 membrane-spanning stretches (helical) occupy residues 21–41, 53–73, 105–125, 127–147, 156–176, 182–202, 225–245, 246–266, and 292–312; these read GVLA…LLVT, IPSP…AGSA, SALV…ALGA, LLAA…YTLV, IVWG…AVTG, ALVM…SLAM, VSAR…LLVP, ATSW…LIVA, and LALL…SFVA.

Belongs to the UbiA prenyltransferase family. Protoheme IX farnesyltransferase subfamily.

The protein localises to the cell membrane. The catalysed reaction is heme b + (2E,6E)-farnesyl diphosphate + H2O = Fe(II)-heme o + diphosphate. It participates in porphyrin-containing compound metabolism; heme O biosynthesis; heme O from protoheme: step 1/1. Its function is as follows. Converts heme B (protoheme IX) to heme O by substitution of the vinyl group on carbon 2 of heme B porphyrin ring with a hydroxyethyl farnesyl side group. The chain is Protoheme IX farnesyltransferase 1 from Saccharopolyspora erythraea (strain ATCC 11635 / DSM 40517 / JCM 4748 / NBRC 13426 / NCIMB 8594 / NRRL 2338).